A 279-amino-acid polypeptide reads, in one-letter code: Energy-coupling factor transporter ATP-binding protein EcfA1 (279 aa).

One can recognise an ABC transporter domain in the interval 6 to 240; that stretch reads VRLEHVFYKY…ADAMREIGLG (235 aa). Position 40–47 (40–47) interacts with ATP; it reads GHNGSGKS.

The protein belongs to the ABC transporter superfamily. Energy-coupling factor EcfA family. Forms a stable energy-coupling factor (ECF) transporter complex composed of 2 membrane-embedded substrate-binding proteins (S component), 2 ATP-binding proteins (A component) and 2 transmembrane proteins (T component).

Its subcellular location is the cell membrane. ATP-binding (A) component of a common energy-coupling factor (ECF) ABC-transporter complex. Unlike classic ABC transporters this ECF transporter provides the energy necessary to transport a number of different substrates. The sequence is that of Energy-coupling factor transporter ATP-binding protein EcfA1 from Listeria monocytogenes serotype 4b (strain F2365).